The following is a 771-amino-acid chain: Ribonucleoside-diphosphate reductase large subunit (771 aa).

Residues 1–92 form the ATP-cone domain; the sequence is MFVIKRNGYK…VSNLHKETKK (92 aa). ATP contacts are provided by residues 5 to 6, 11 to 17, Thr53, Asp57, and Lys88; these read KR and ENVMFDK. GDP contacts are provided by Ser202 and Ser217. DTTP contacts are provided by residues 226–228, Lys243, and Arg256; that span reads DSI. Asn427 contacts GDP. The active-site Proton acceptor is the Asn427. Cys429 (cysteine radical intermediate) is an active-site residue. Residues Glu431 and 603–606 contribute to the GDP site; that span reads TAST. Glu431 serves as the catalytic Proton acceptor.

Belongs to the ribonucleoside diphosphate reductase large chain family. In terms of assembly, interacts with RNR2/OPG047 subunit. The cofactor is Mg(2+).

The enzyme catalyses a 2'-deoxyribonucleoside 5'-diphosphate + [thioredoxin]-disulfide + H2O = a ribonucleoside 5'-diphosphate + [thioredoxin]-dithiol. Ribonucleoside-diphosphate reductase holoenzyme provides the precursors necessary for viral DNA synthesis. Allows virus growth in non-dividing cells. Catalyzes the biosynthesis of deoxyribonucleotides from the corresponding ribonucleotides. This is Ribonucleoside-diphosphate reductase large subunit (OPG080) from Homo sapiens (Human).